The sequence spans 428 residues: GTPase Obg (428 aa).

The region spanning 1–158 (MFVDQVQVEV…RFIKLELKVL (158 aa)) is the Obg domain. Residues 159–333 (ADVGLVGFPS…LMHKTAEVLK (175 aa)) enclose the OBG-type G domain. GTP is bound by residues 165–172 (GFPSVGKS), 190–194 (FTTLV), 212–215 (DLPG), 282–285 (TKMD), and 314–316 (SSL). Residues Ser172 and Thr192 each coordinate Mg(2+). The 79-residue stretch at 350–428 (YKYQPEPALK…IDDFTFEFVE (79 aa)) folds into the OCT domain.

It belongs to the TRAFAC class OBG-HflX-like GTPase superfamily. OBG GTPase family. Monomer. The cofactor is Mg(2+).

The protein localises to the cytoplasm. An essential GTPase which binds GTP, GDP and possibly (p)ppGpp with moderate affinity, with high nucleotide exchange rates and a fairly low GTP hydrolysis rate. Plays a role in control of the cell cycle, stress response, ribosome biogenesis and in those bacteria that undergo differentiation, in morphogenesis control. The chain is GTPase Obg from Lacticaseibacillus casei (strain BL23) (Lactobacillus casei).